The primary structure comprises 92 residues: C-C motif chemokine 5 (92 aa).

A signal peptide spans 1 to 23 (MKVSTAAFAVLLTAAAFCTPASA). 2 disulfides stabilise this stretch: cysteine 33–cysteine 57 and cysteine 34–cysteine 73.

Belongs to the intercrine beta (chemokine CC) family.

The protein localises to the secreted. In terms of biological role, chemoattractant for blood monocytes, memory T-helper cells and eosinophils. Causes the release of histamine from basophils and activates eosinophils. May activate several chemokine receptors including CCR1, CCR3, CCR4 and CCR5. May also be an agonist of the G protein-coupled receptor GPR75. Together with GPR75, may play a role in neuron survival through activation of a downstream signaling pathway involving the PI3, Akt and MAP kinases. By activating GPR75 may also play a role in insulin secretion by islet cells. This chain is C-C motif chemokine 5 (CCL5), found in Felis catus (Cat).